The chain runs to 371 residues: MEKQYLTFISFCFSITICGFLIVSWLARSIIRNGIRTLTWRKETKRKKKNQEDENKMSLLDLPDLTLDCILEKLSPSELCAMTSVCSELRDKCVSDHLWEKHMETKWGRLMGDAAIQEWKSHVATIMRCLTSSSSSSRKSKPNWSSRFVANLKPFAWLSSNHGCENRGSSSYLAPIDSVMYWYSNLENGKFWFPAQVYNRENGHVGFMMSCYDAKIRYDFKTDTFQARYSAHGRRAAEEKVTWQRLRPSQDDTKSRDLHVSDCLHGLRPGDHFEIQWRRTKEFPYGWWFGIVGHLQNCDGVQNCRCDSDENVVMEFRQFRPESPWRRTVIKRKDHRETGNEENGFYGGVKKLGTEEEISTWKQLWPSQALE.

One can recognise an F-box domain in the interval 56–102 (KMSLLDLPDLTLDCILEKLSPSELCAMTSVCSELRDKCVSDHLWEKH).

The chain is F-box protein At2g41170 from Arabidopsis thaliana (Mouse-ear cress).